Consider the following 79-residue polypeptide: RNA-binding protein Hfq (79 aa).

One can recognise a Sm domain in the interval 10–69 (DPFLNALRKEHVPVSIYLVNGIKLQGNIESFDQYVVLLRNTVTQMVYKHAISTVVPARAV).

The protein belongs to the Hfq family. Homohexamer.

In terms of biological role, RNA chaperone that binds small regulatory RNA (sRNAs) and mRNAs to facilitate mRNA translational regulation in response to envelope stress, environmental stress and changes in metabolite concentrations. Also binds with high specificity to tRNAs. In Cupriavidus metallidurans (strain ATCC 43123 / DSM 2839 / NBRC 102507 / CH34) (Ralstonia metallidurans), this protein is RNA-binding protein Hfq.